Reading from the N-terminus, the 152-residue chain is MTDKPFWQTKNLNQLTRSEWESLCDGCGQCCLHKLQDEDTDEIYWTSVACTLLNPETCQCRDYPNRKKTVPDCVFLTPEIVDEVDWLPVTCAYRLVAEGSDLYWWHPLVSGSPETVHEAGISVRGKVTAFDHDMQDDDDYLDHMVTPDKIAR.

Belongs to the UPF0260 family.

The polypeptide is UPF0260 protein BR1477/BS1330_I1471 (Brucella suis biovar 1 (strain 1330)).